We begin with the raw amino-acid sequence, 336 residues long: Potassium channel subfamily K member 1 (336 aa).

Over 1–20 (MLQSLAGSSCVRLVERHRSA) the chain is Cytoplasmic. The helical transmembrane segment at 21 to 41 (WCFGFLVLGYLLYLVFGAVVF) threads the bilayer. Residues 42–103 (SSVELPYEDL…SNASGNWNWD (62 aa)) lie on the Extracellular side of the membrane. N95 carries an N-linked (GlcNAc...) asparagine glycan. The segment at residues 104 to 116 (FTSALFFASTVLS) is an intramembrane region (helical). The stretch at 117-122 (TTGYGH) is an intramembrane region. The tract at residues 117–122 (TTGYGH) is selectivity filter 1. The Extracellular portion of the chain corresponds to 123–132 (TVPLSDGGKA). A helical membrane pass occupies residues 133-156 (FCIIYSVIGIPFTLLFLTAVVQRV). Over 157 to 181 (TVHVTRRPVLYFHIRWGFSKQVVAI) the chain is Cytoplasmic. A helical transmembrane segment spans residues 182 to 202 (VHAVLLGFVTVSCFFFIPAAV). Residues 203 to 211 (FSVLEDDWN) lie on the Extracellular side of the membrane. Residues 212-224 (FLESFYFCFISLS) constitute an intramembrane region (helical). Positions 225-230 (TIGLGD) are selectivity filter 2. An intramembrane segment occupies 225 to 231 (TIGLGDY). Residues 232–243 (VPGEGYNQKFRE) lie on the Extracellular side of the membrane. The helical transmembrane segment at 244 to 267 (LYKIGITCYLLLGLIAMLVVLETF) threads the bilayer. Residues 268–336 (CELHELKKFR…PPYEDGSANH (69 aa)) lie on the Cytoplasmic side of the membrane. K274 is covalently cross-linked (Glycyl lysine isopeptide (Lys-Gly) (interchain with G-Cter in SUMO)). The segment at 293 to 299 (IMEHDQL) is important for intracellular retention in recycling endosomes. The interval 310-336 (GLKEEQKQNEPFVASQSPPYEDGSANH) is disordered. Phosphoserine is present on S326.

This sequence belongs to the two pore domain potassium channel (TC 1.A.1.8) family. Homodimer; disulfide-linked. Heterodimer with KCNK2; disulfide-linked. In astrocytes, forms mostly heterodimeric potassium channels with KCNK2, with only a minor proportion of functional channels containing homodimeric KCNK1. Interacts with KCNK3 and KCNK9, forming functional heterodimeric channels. Interacts with GNG4. Identified in a complex with PSD and ARF6; interacts only with PSD that is bound to ARF6. Interacts with UBE2I. In terms of processing, sumoylation is controversial. Sumoylated by UBE2I. Not sumoylated when expressed in xenopus oocytes or mammalian cells. Sumoylation inactivates the channel, but does not interfere with expression at the cell membrane. Sumoylation of a single subunit is sufficient to silence the dimeric channel. Sumoylation of KCNK1 is sufficient to silence heterodimeric channels formed by KCNK1 and KCNK3 or KCNK9. Desumoylated by SENP1; this activates the channel. Desumoylated by SENP1; this strongly increases halothane-mediated activation of heterodimeric channels formed with KCNK9. SENP1 treatment has no effect. Detected in brain and in kidney cortex and medulla, especially at the renal brush border membranes of the proximal convoluted tubules, in distal tubules and on intercalated cells of the collecting duct. Detected in cerebellum granule neurons. Detected in astrocytes in hippocampus stratum radiatum. Highly expressed in the stria vascularis in the cochlea. Detected in neurons in Scarpa's ganglion in the inner ear, at nerve terminals in the crista ampullaris, in supporting cells and dark cells, but not in hair cells (at protein level). Detected in the brain cerebellar granule cell layer, amygdala, thalamus reticular nucleus, habenula, mesencephalic trigeminal neurons, neocortex and piriform cortex, and at lower levels in the olfactory bulb. Detected in Scarpa's ganglia and crista ampullaris in the inner ear.

The protein localises to the cell membrane. Its subcellular location is the recycling endosome. It localises to the apical cell membrane. It is found in the cytoplasmic vesicle. The protein resides in the perikaryon. The protein localises to the cell projection. Its subcellular location is the dendrite. It localises to the synaptic cell membrane. It catalyses the reaction K(+)(in) = K(+)(out). The catalysed reaction is NH4(+)(in) = NH4(+)(out). It carries out the reaction Na(+)(in) = Na(+)(out). The enzyme catalyses Rb(+)(in) = Rb(+)(out). It catalyses the reaction Cs(+)(in) = Cs(+)(out). The catalysed reaction is Li(+)(in) = Li(+)(out). It carries out the reaction L-glutamate(out) = L-glutamate(in). The enzyme catalyses chloride(in) = chloride(out). Inhibited by 100 uM quinine. Slightly inhibited by Ba(+). Activity is first increased and then decreased when the extracellular pH is lowered to 6.0. Ion channel that contributes to passive transmembrane potassium transport and to the regulation of the resting membrane potential in brain astrocytes, but also in kidney and in other tissues. Forms dimeric channels through which potassium ions pass in accordance with their electrochemical gradient. The channel is selective for K(+) ions at physiological potassium concentrations and at neutral pH, but becomes permeable to Na(+) at subphysiological K(+) levels and upon acidification of the extracellular medium. The homodimer has very low potassium channel activity, when expressed in heterologous systems, and can function as weakly inward rectifying potassium channel. Channel activity is modulated by activation of serotonin receptors. Heterodimeric channels containing KCNK1 and KCNK2 have much higher activity, and may represent the predominant form in astrocytes. Heterodimeric channels containing KCNK1 and KCNK3 or KCNK9 have much higher activity. Heterodimeric channels formed by KCNK1 and KCNK9 may contribute to halothane-sensitive currents. Mediates outward rectifying potassium currents in dentate gyrus granule cells and contributes to the regulation of their resting membrane potential. Contributes to the regulation of action potential firing in dentate gyrus granule cells and down-regulates their intrinsic excitability. Contributes to the regulation of the resting membrane potential of pancreatic beta cells. In astrocytes, the heterodimer formed by KCNK1 and KCNK2 is required for rapid glutamate release in response to activation of G-protein coupled receptors, such as F2R and CNR1. Required for normal ion and water transport in the kidney. The low channel activity of homodimeric KCNK1 may be due to sumoylation. The low channel activity may be due to rapid internalization from the cell membrane and retention in recycling endosomes. Permeable to monovalent cations with ion selectivity for K(+) &gt; Rb(+) &gt;&gt; NH4(+) &gt;&gt; Cs(+) = Na(+) = Li(+). The protein is Potassium channel subfamily K member 1 of Rattus norvegicus (Rat).